The following is a 244-amino-acid chain: Cysteine-rich secretory protein 2 (244 aa).

An N-terminal signal peptide occupies residues 1–21 (MALLPVVVFLITMLLPCVLTN). The 128-residue stretch at 43–170 (NKHNQLRKSV…SLKYYYVCQY (128 aa)) folds into the SCP domain. 5 disulfide bridges follow: Cys190–Cys197, Cys193–Cys202, Cys206–Cys239, Cys215–Cys233, and Cys224–Cys237. Residues 206–239 (CEYEDLLSNCESLKNTAGCEHQLLVEKCKATCRC) form the ShKT domain.

This sequence belongs to the CRISP family. Interacts with NSUN4 isoform 3. Testis.

The protein localises to the secreted. In terms of biological role, may regulate some ion channels' activity and thereby regulate calcium fluxes during sperm capacitation. This chain is Cysteine-rich secretory protein 2 (CRISP2), found in Cavia porcellus (Guinea pig).